Here is a 432-residue protein sequence, read N- to C-terminus: 3-phosphoshikimate 1-carboxyvinyltransferase (432 aa).

K22, S23, and R27 together coordinate 3-phosphoshikimate. K22 contacts phosphoenolpyruvate. Residues G96 and R127 each contribute to the phosphoenolpyruvate site. Residues S173, S174, Q175, S201, D316, N339, and K343 each coordinate 3-phosphoshikimate. A phosphoenolpyruvate-binding site is contributed by Q175. D316 (proton acceptor) is an active-site residue. Phosphoenolpyruvate-binding residues include R347, R391, and K416.

Belongs to the EPSP synthase family. Monomer.

It is found in the cytoplasm. The catalysed reaction is 3-phosphoshikimate + phosphoenolpyruvate = 5-O-(1-carboxyvinyl)-3-phosphoshikimate + phosphate. The protein operates within metabolic intermediate biosynthesis; chorismate biosynthesis; chorismate from D-erythrose 4-phosphate and phosphoenolpyruvate: step 6/7. Functionally, catalyzes the transfer of the enolpyruvyl moiety of phosphoenolpyruvate (PEP) to the 5-hydroxyl of shikimate-3-phosphate (S3P) to produce enolpyruvyl shikimate-3-phosphate and inorganic phosphate. The sequence is that of 3-phosphoshikimate 1-carboxyvinyltransferase from Histophilus somni (Haemophilus somnus).